The sequence spans 1093 residues: TATA element modulatory factor (1093 aa).

Disordered regions lie at residues 38-80 (WAET…SPKA) and 108-189 (TIQK…DMKV). A compositionally biased stretch (polar residues) spans 51–70 (SPVSGGWDTSTWGLKSNTEP). Residues Ser72, Ser77, Ser112, and Ser136 each carry the phosphoserine modification. The segment covering 123-137 (QRPEEEVKSSLHESL) has biased composition (basic and acidic residues). The segment covering 139–158 (IGQSRTPETTESQVKDSSLC) has biased composition (polar residues). Over residues 173–187 (TEGKHEETVNKESDM) the composition is skewed to basic and acidic residues. Residues Ser199 and Ser217 each carry the phosphoserine modification. Residues 229–238 (PKEQKHEDRQ) show a composition bias toward basic and acidic residues. 2 disordered regions span residues 229–260 (PKEQ…SDIE) and 266–285 (SVIS…SKSS). Residues 246–257 (VSTFSSGTSTTS) are compositionally biased toward low complexity. Phosphoserine is present on residues Ser328, Ser330, Ser333, Ser338, Ser344, Ser413, Ser542, Ser925, and Ser928. The interaction with Elongin BC complex stretch occupies residues 333–342 (SLDSRSVSEI). The stretch at 439–922 (EALSEKEDVC…QETIKEKERK (484 aa)) forms a coiled coil. The disordered stretch occupies residues 919–939 (KERKPFSVSSTPTMSRSSSIS). Positions 925–939 (SVSSTPTMSRSSSIS) are enriched in low complexity. Thr929 bears the Phosphothreonine mark. Ser933 is subject to Phosphoserine. Residues 984–1092 (SIIENLQSQL…QIDELLRQSL (109 aa)) adopt a coiled-coil conformation.

In terms of assembly, interacts with TRNP1; may regulate TRNP1 proteasomal degradation. Component of the SNF/SWI transcription factor complexes. Interacts with RAB6A. Interacts with STAT3 and FER. Interacts with TCEB1. Post-translationally, phosphorylated by FER.

The protein localises to the cytoplasm. Its subcellular location is the nucleus. It localises to the golgi apparatus membrane. In terms of biological role, potential coactivator of the androgen receptor. Mediates STAT3 degradation. May play critical roles in two RAB6-dependent retrograde transport processes: one from endosomes to the Golgi and the other from the Golgi to the ER. This protein binds the HIV-1 TATA element and inhibits transcriptional activation by the TATA-binding protein (TBP). This chain is TATA element modulatory factor (TMF1), found in Homo sapiens (Human).